The primary structure comprises 524 residues: MLWAFIVWLGALCIYGSAFDILIYAPRMMQSHVYFTARIANVLAARGHKVTVIDNVFRYDVDNELSSDIHEIISVEPSPEVTKLLNTGSLPTILWNSKASPEEQRTIMEGLGHVHRLQCTHLIENSTLIPKLQEIKFDFAIHEVFDSCGVGILEVIGVQKTVIVSSTGPMDVVPITLGISDTLNTPSLLSDYGSYLSFFEKRRNLKFLSGMLNFHEMQDSMISPLFKKYYGLKKPTGEIMRQANLLFYNIHEGSDGMRMRGRRSFDIGGIAFKDQKNLTMEYQTLLSDPRPKVLVSFGTAATSSHMPQNLKNSLMTAMKQMNNVLFIWKYEMEDNFTKQEELTTNIIFKKFLPQTDLLASSKIDLFVTHCGQNSLLEAFNSGVRVLAVPLFGDQHRNAKLAFENGLIEILPKSDIETPAKIVKAVKTGLEPNAKLDQNIVLISSLLRNSKENAENLLISTIEATYSTEFPPNFSKFPKNYHPNTLVRLIDSSIALVFMLFIFVFVNHFRKNYVGFKYPLSFSTK.

The first 20 residues, 1 to 20 (MLWAFIVWLGALCIYGSAFD), serve as a signal peptide directing secretion. N-linked (GlcNAc...) asparagine glycosylation is found at N125, N277, and N335. A helical transmembrane segment spans residues 488 to 508 (LIDSSIALVFMLFIFVFVNHF).

The protein belongs to the UDP-glycosyltransferase family.

It is found in the membrane. The enzyme catalyses glucuronate acceptor + UDP-alpha-D-glucuronate = acceptor beta-D-glucuronoside + UDP + H(+). This is Putative UDP-glucuronosyltransferase ugt-56 (ugt-56) from Caenorhabditis elegans.